The sequence spans 151 residues: Copper transporter 3 (151 aa).

The next 2 membrane-spanning stretches (helical) occupy residues 52–72 (LKMYWVCLAVIFVISAFSECL) and 103–123 (YLVMLAVMSFNGGVFVAAMAG).

This sequence belongs to the copper transporter (Ctr) (TC 1.A.56) family. SLC31A subfamily. In terms of tissue distribution, highly expressed in stems and at lower levels in leaves and flowers.

The protein resides in the membrane. In terms of biological role, involved in the transport of copper. The sequence is that of Copper transporter 3 (COPT3) from Arabidopsis thaliana (Mouse-ear cress).